Here is a 213-residue protein sequence, read N- to C-terminus: Uracil phosphoribosyltransferase (213 aa).

Residues arginine 78, arginine 103, and 130-138 contribute to the 5-phospho-alpha-D-ribose 1-diphosphate site; that span reads DPMLATGGT. Residues isoleucine 197 and 202–204 each bind uracil; that span reads GDA. Position 203 (aspartate 203) interacts with 5-phospho-alpha-D-ribose 1-diphosphate.

The protein belongs to the UPRTase family. Requires Mg(2+) as cofactor.

The catalysed reaction is UMP + diphosphate = 5-phospho-alpha-D-ribose 1-diphosphate + uracil. It functions in the pathway pyrimidine metabolism; UMP biosynthesis via salvage pathway; UMP from uracil: step 1/1. Allosterically activated by GTP. Functionally, catalyzes the conversion of uracil and 5-phospho-alpha-D-ribose 1-diphosphate (PRPP) to UMP and diphosphate. In Nocardioides sp. (strain ATCC BAA-499 / JS614), this protein is Uracil phosphoribosyltransferase.